We begin with the raw amino-acid sequence, 289 residues long: Serine/threonine-protein phosphatase Pgam5, mitochondrial (289 aa).

A helical membrane pass occupies residues 7 to 23 (FACGTGAGLAAYYLQRL).

The protein belongs to the phosphoglycerate mutase family. BPG-dependent PGAM subfamily. Interacts with Pk92B/ASK1.

It localises to the mitochondrion outer membrane. It carries out the reaction O-phospho-L-seryl-[protein] + H2O = L-seryl-[protein] + phosphate. It catalyses the reaction O-phospho-L-threonyl-[protein] + H2O = L-threonyl-[protein] + phosphate. Its function is as follows. Displays phosphatase activity for serine/threonine residues, and dephosphorylates and activates Pk92B kinase. Has apparently no phosphoglycerate mutase activity. The polypeptide is Serine/threonine-protein phosphatase Pgam5, mitochondrial (Drosophila simulans (Fruit fly)).